The sequence spans 812 residues: Fibroblast growth factor receptor 1 (812 aa).

A signal peptide spans 1-20 (MFSGMSLLLWGVLLGAALSV). Over 21 to 371 (ARPPSTLPDE…PALLASPLQL (351 aa)) the chain is Extracellular. The 94-residue stretch at 25–118 (STLPDEVAPK…YTVLCSVNVS (94 aa)) folds into the Ig-like C2-type 1 domain. Cysteines 54 and 100 form a disulfide. N-linked (GlcNAc...) asparagine glycosylation is found at Asn76, Asn116, Asn133, Asn223, Asn236, Asn260, Asn292, Asn313, and Asn326. Residues 121 to 153 (LPSAEDDDEDDDNSSSEEKAAENSKPNRPLWSH) are disordered. Positions 124-135 (AEDDDEDDDNSS) are enriched in acidic residues. Ig-like C2-type domains are found at residues 154 to 242 (PEKM…YQLD) and 251 to 353 (PILQ…AWLT). Cys174 and Cys226 form a disulfide bridge. Cys273 and Cys337 are disulfide-bonded. Residues 372–393 (EIIIYCTGAAFVSAMVVTIIIF) form a helical membrane-spanning segment. At 394 to 812 (KMKHPSKKSD…KYSNGGLKKR (419 aa)) the chain is on the cytoplasmic side. The residue at position 457 (Tyr457) is a Phosphotyrosine; by autocatalysis. The Protein kinase domain occupies 472-761 (LILGKPLGEG…LALSSNQEYL (290 aa)). ATP contacts are provided by residues 478-484 (LGEGCFG), Lys508, 556-558 (EYT), and Asn562. Phosphotyrosine; by autocatalysis is present on residues Tyr577 and Tyr579. The active-site Proton acceptor is Asp617. ATP is bound by residues Arg621 and Asp635. Tyr647, Tyr648, Tyr724, and Tyr760 each carry phosphotyrosine; by autocatalysis. The interval 784–812 (SGEDSMFSHDPLPDEPCLPKYSNGGLKKR) is disordered.

It belongs to the protein kinase superfamily. Tyr protein kinase family. Fibroblast growth factor receptor subfamily. As to quaternary structure, monomer. Homodimer after ligand binding. Interacts with il17rd. Autophosphorylated. Binding of FGF family members together with heparan sulfate proteoglycan or heparin promotes receptor dimerization and autophosphorylation on tyrosine residues. Autophosphorylation occurs in trans between the two FGFR molecules present in the dimer and proceeds in a highly ordered manner. Phosphotyrosine residues provide docking sites for interacting proteins and so are crucial for FGFR1 function and its regulation. Post-translationally, ubiquitinated. FGFR1 is rapidly ubiquitinated after autophosphorylation, leading to internalization and degradation. In terms of processing, N-glycosylated in the endoplasmic reticulum. The N-glycan chains undergo further maturation to an Endo H-resistant form in the Golgi apparatus.

It localises to the cell membrane. Its subcellular location is the nucleus. The protein localises to the cytoplasm. The protein resides in the cytosol. It is found in the cytoplasmic vesicle. The catalysed reaction is L-tyrosyl-[protein] + ATP = O-phospho-L-tyrosyl-[protein] + ADP + H(+). Its activity is regulated as follows. Present in an inactive conformation in the absence of bound ligand. Ligand binding leads to dimerization and activation by sequential autophosphorylation on tyrosine residues. Tyrosine-protein kinase that acts as a cell-surface receptor for fibroblast growth factors and plays an essential role in the regulation of embryonic development, cell proliferation, differentiation and migration. Required for normal mesoderm patterning and normal skeletogenesis. Phosphorylates PLCG1, FRS2, GAB1 and SHB. Ligand binding leads to the activation of several signaling cascades. Activation of PLCG1 leads to the production of the cellular signaling molecules diacylglycerol and inositol-1,4,5-trisphosphate. Phosphorylation of FRS2 triggers recruitment of GRB2, GAB1, PIK3R1 and SOS1, and mediates activation of RAS, MAPK1/ERK2, MAPK3/ERK1 and the MAP kinase signaling pathway, as well as of the AKT1 signaling pathway. Promotes phosphorylation of SHC1, STAT1 and PTPN11/SHP2. In the nucleus, enhances RPS6KA1 and CREB1 activity and contributes to the regulation of transcription. FGFR1 signaling is down-regulated by ubiquitination, internalization and degradation. The chain is Fibroblast growth factor receptor 1 (fgfr1) from Xenopus laevis (African clawed frog).